A 270-amino-acid polypeptide reads, in one-letter code: 2-aminoethanethiol dioxygenase (270 aa).

The segment at 21–48 (FRGSGGGRGASDRDAASGPEAPMQPGFP) is disordered. His-112 and His-114 together coordinate Fe cation. Residues 140–164 (GGQRPRALPPEQQFEPPLQPREREA) form a disordered region. Residue His-193 participates in Fe cation binding. A cross-link (3'-(S-cysteinyl)-tyrosine (Cys-Tyr)) is located at residues 220–223 (CHYY).

As to quaternary structure, monomer. Fe cation is required as a cofactor.

It catalyses the reaction cysteamine + O2 = hypotaurine + H(+). It carries out the reaction N-terminal L-cysteinyl-[protein] + O2 = N-terminal S-hydroxy-S-oxy-L-cysteinyl-[protein] + H(+). Plays a vital role in regulating thiol metabolism and preserving oxygen homeostasis by oxidizing the sulfur of cysteamine and N-terminal cysteine-containing proteins to their corresponding sulfinic acids using O2 as a cosubstrate. Catalyzes the oxidation of cysteamine (2-aminoethanethiol) to hypotaurine. Catalyzes the oxidation of regulators of G-protein signaling 4 (RGS4) and 5 (RGS5) and interleukin-32 (IL32). This Homo sapiens (Human) protein is 2-aminoethanethiol dioxygenase (ADO).